Consider the following 392-residue polypeptide: Chorismate synthase (392 aa).

Arginine 40 and arginine 46 together coordinate NADP(+). Residues 135 to 137 (RAS), 256 to 257 (QA), glycine 300, 315 to 319 (KPISS), and arginine 341 each bind FMN.

It belongs to the chorismate synthase family. In terms of assembly, homotetramer. Requires FMNH2 as cofactor.

It carries out the reaction 5-O-(1-carboxyvinyl)-3-phosphoshikimate = chorismate + phosphate. Its pathway is metabolic intermediate biosynthesis; chorismate biosynthesis; chorismate from D-erythrose 4-phosphate and phosphoenolpyruvate: step 7/7. In terms of biological role, catalyzes the anti-1,4-elimination of the C-3 phosphate and the C-6 proR hydrogen from 5-enolpyruvylshikimate-3-phosphate (EPSP) to yield chorismate, which is the branch point compound that serves as the starting substrate for the three terminal pathways of aromatic amino acid biosynthesis. This reaction introduces a second double bond into the aromatic ring system. This Salinispora tropica (strain ATCC BAA-916 / DSM 44818 / JCM 13857 / NBRC 105044 / CNB-440) protein is Chorismate synthase.